The sequence spans 1461 residues: Phospholipid-transporting ATPase VB (1461 aa).

The Cytoplasmic portion of the chain corresponds to 1–82; the sequence is MALSVDSSWH…TTKYTLFTFL (82 aa). The chain crosses the membrane as a helical span at residues 83–104; sequence PRNLFEQFHRWANLYFLFLVIL. At 105-110 the chain is on the exoplasmic loop side; that stretch reads NWMPSM. A helical transmembrane segment spans residues 111–132; sequence EVFHREITMLPLAIVLFVIMIK. The Cytoplasmic segment spans residues 133–316; sequence DGMEDFKRHR…SKIERRMNID (184 aa). Residues 317–338 form a helical membrane-spanning segment; that stretch reads IFFCIGILILMCLIGAVGHSIW. At 339–368 the chain is on the exoplasmic loop side; the sequence is NGTFEEHPPFDVPDANGSFLPSALGGFYMF. Residues 369–390 form a helical membrane-spanning segment; it reads LTMIILLQVLIPISLYVSIELV. Residues 391 to 1111 are Cytoplasmic-facing; that stretch reads KLGQVFFLSN…GHWCYSRLAR (721 aa). D433 acts as the 4-aspartylphosphate intermediate in catalysis. ATP-binding residues include D433, K434, and T435. D433 is a Mg(2+) binding site. Position 435 (T435) interacts with Mg(2+). 2 stretches are compositionally biased toward polar residues: residues 496–511 and 530–539; these read MRSQ…SQSA and SQPPVAFSSS. 2 disordered regions span residues 496 to 541 and 640 to 687; these read MRSQ…SSIE and TAPS…MWDQ. ATP-binding residues include E724, F766, K790, R835, T915, G916, D917, R1029, and K1035. Position 1055 (D1055) interacts with Mg(2+). ATP is bound by residues N1058 and D1059. D1059 lines the Mg(2+) pocket. The helical transmembrane segment at 1112-1132 threads the bilayer; that stretch reads MVVYYLYKNVCYVNLLFWYQF. Residues 1133–1144 are Exoplasmic loop-facing; it reads FCGFSSSTMIDY. A helical membrane pass occupies residues 1145 to 1164; sequence WQMIFFNLFFTSLPPLVFGV. Topologically, residues 1165–1194 are cytoplasmic; it reads LDKDISAETLLALPELYKSGQNSECYNLST. Residues 1195–1216 form a helical membrane-spanning segment; sequence FWISMVDAFYQSLICFFIPYLA. Residues 1217-1223 lie on the Exoplasmic loop side of the membrane; that stretch reads YKGSDID. A helical membrane pass occupies residues 1224–1246; sequence VFTFGTPINTISLTTILLHQAME. The Cytoplasmic portion of the chain corresponds to 1247 to 1252; sequence MKTWTI. The chain crosses the membrane as a helical span at residues 1253–1273; sequence FHGVVLLGSFLMYFLVSLLYN. At 1274–1291 the chain is on the exoplasmic loop side; sequence ATCVICNSPTNPYWVMEG. The helical transmembrane segment at 1292-1316 threads the bilayer; the sequence is QLSNPTFYLVCFLTPVVALLPRYFF. The Cytoplasmic segment spans residues 1317-1461; that stretch reads LSLQGTCGKS…HRRSQSSLTI (145 aa). The interval 1346–1397 is disordered; sequence IQSWRSRQRPAPVPEVARPTHHPVSSITGQDFSASTPKSSNPPKRKHVEESV. The segment covering 1368-1387 has biased composition (polar residues); the sequence is PVSSITGQDFSASTPKSSNP.

The protein belongs to the cation transport ATPase (P-type) (TC 3.A.3) family. Type IV subfamily. As to quaternary structure, component of a P4-ATPase flippase complex which consists of a catalytic alpha subunit ATP10B and an accessory beta subunit TMEM30A. Mg(2+) is required as a cofactor. In terms of processing, autophosphorylated at the conserved aspartate of the P-type ATPase signature sequence. Expressed in predominantly in brain structures including medulla oblongata, substantia nigra and basal ganglia. Expressed in the gastrointestinal system with highest levels in the small intestine and colon. Also expressed at low levels in testis and thymus.

Its subcellular location is the late endosome membrane. The protein resides in the lysosome membrane. The protein localises to the endoplasmic reticulum membrane. It catalyses the reaction ATP + H2O + phospholipidSide 1 = ADP + phosphate + phospholipidSide 2.. The enzyme catalyses a beta-D-glucosyl-(1&lt;-&gt;1')-N-acylsphing-4-enine(out) + ATP + H2O = a beta-D-glucosyl-(1&lt;-&gt;1')-N-acylsphing-4-enine(in) + ADP + phosphate + H(+). Functionally, catalytic component of a P4-ATPase flippase complex, which catalyzes the hydrolysis of ATP coupled to the transport of glucosylceramide (GlcCer) from the outer to the inner leaflet of lysosome membranes. Plays an important role in the maintenance of lysosome membrane integrity and function in cortical neurons. The sequence is that of Phospholipid-transporting ATPase VB from Homo sapiens (Human).